Reading from the N-terminus, the 353-residue chain is Probable D-xylulose reductase A (353 aa).

Zn(2+)-binding residues include cysteine 42, histidine 67, and glutamate 68. Residue 177–182 (GAGPVG) coordinates NAD(+).

Belongs to the zinc-containing alcohol dehydrogenase family. Zn(2+) is required as a cofactor.

It catalyses the reaction xylitol + NAD(+) = D-xylulose + NADH + H(+). Its pathway is carbohydrate degradation; L-arabinose degradation via L-arabinitol; D-xylulose 5-phosphate from L-arabinose (fungal route): step 4/5. Xylitol dehydrogenase which catalyzes the conversion of xylitol to D-xylulose. Xylose is a major component of hemicelluloses such as xylan. Most fungi utilize D-xylose via three enzymatic reactions, xylose reductase (XR), xylitol dehydrogenase (XDH), and xylulokinase, to form xylulose 5-phosphate, which enters pentose phosphate pathway. The polypeptide is Probable D-xylulose reductase A (xdhA) (Aspergillus terreus (strain NIH 2624 / FGSC A1156)).